A 131-amino-acid polypeptide reads, in one-letter code: Profilin-7 (131 aa).

Cysteines 13 and 115 form a disulfide. Residues 81–97 (AVIRGKKGAGGITIKKT) carry the Involved in PIP2 interaction motif. The residue at position 111 (T111) is a Phosphothreonine.

Belongs to the profilin family. As to quaternary structure, occurs in many kinds of cells as a complex with monomeric actin in a 1:1 ratio. Post-translationally, phosphorylated by MAP kinases.

Its subcellular location is the cytoplasm. The protein resides in the cytoskeleton. Binds to actin and affects the structure of the cytoskeleton. At high concentrations, profilin prevents the polymerization of actin, whereas it enhances it at low concentrations. This Olea europaea (Common olive) protein is Profilin-7.